The following is a 429-amino-acid chain: Probable proton-coupled zinc antiporter SLC30A4 (429 aa).

Residues 1–113 (MAGSGAWKRL…LLKQRKVKTR (113 aa)) lie on the Cytoplasmic side of the membrane. The chain crosses the membrane as a helical span at residues 114 to 134 (LTIAAVLYLLFMIGELVGGYI). Residues 135–143 (ANSLAIMTD) lie on the Lumenal side of the membrane. The chain crosses the membrane as a helical span at residues 144 to 164 (ALHMLTDLSAIILTLLALWLS). 2 residues coordinate Zn(2+): His-146 and Asp-150. At 165–178 (SKSPTKRFTFGFHR) the chain is on the cytoplasmic side. The chain crosses the membrane as a helical span at residues 179–199 (LEVLSAMISVLLVYILMGFLL). The Lumenal segment spans residues 200-216 (YEAVQRTIHMKYEINGD). A helical transmembrane segment spans residues 217–237 (IMLITAAIGVAVNVIMGFLLN). Residues 238 to 274 (QSGHHHAHSHSLPSNSPTTGPRCGHNQGQDSLAVRAA) lie on the Cytoplasmic side of the membrane. A zinc binding region spans residues 240–264 (GHHHAHSHSLPSNSPTTGPRCGHNQ). A helical membrane pass occupies residues 275–295 (FVHALGDLVQSVGVLIAAYII). Zn(2+) is bound by residues His-277 and Asp-281. The Lumenal segment spans residues 296–310 (RFKPEYRIADPICTY). Residues 311 to 331 (VFSLLVAFTTFRIIWDTVVII) form a helical membrane-spanning segment. Residues 332–429 (LEGVPSHLNV…TCANCQSSSS (98 aa)) lie on the Cytoplasmic side of the membrane.

This sequence belongs to the cation diffusion facilitator (CDF) transporter (TC 2.A.4) family. SLC30A subfamily. Homodimerization could regulate efficiency for zinc transport. Interacts with TMEM163.

It is found in the endosome membrane. It localises to the late endosome membrane. Its subcellular location is the lysosome membrane. The catalysed reaction is Zn(2+)(in) + 2 H(+)(out) = Zn(2+)(out) + 2 H(+)(in). Probable proton-coupled zinc ion antiporter mediating zinc import from cytoplasm potentially into the endocytic compartment. Controls zinc deposition in milk. This Bos taurus (Bovine) protein is Probable proton-coupled zinc antiporter SLC30A4.